A 151-amino-acid chain; its full sequence is Ribosome maturation factor RimP (151 aa).

It belongs to the RimP family.

It is found in the cytoplasm. Required for maturation of 30S ribosomal subunits. The protein is Ribosome maturation factor RimP of Shewanella halifaxensis (strain HAW-EB4).